Reading from the N-terminus, the 157-residue chain is Epithelial membrane protein 1 (157 aa).

Residues 1–21 (MLVLLAGIFVVHIATVIMLFV) traverse the membrane as a helical segment. 2 N-linked (GlcNAc...) asparagine glycosylation sites follow: Asn-43 and Asn-46. The next 3 membrane-spanning stretches (helical) occupy residues 67-87 (FMIL…FQLF), 95-115 (FFLS…GVSI), and 134-154 (YILG…YLVL).

The protein belongs to the PMP-22/EMP/MP20 family.

The protein localises to the membrane. The protein is Epithelial membrane protein 1 (EMP1) of Homo sapiens (Human).